The sequence spans 752 residues: Probable beta-glucosidase D (752 aa).

The N-terminal stretch at 1–18 (MRFVSLAVGAALLGAAGA) is a signal peptide. 2 N-linked (GlcNAc...) asparagine glycosylation sites follow: Asn-187 and Asn-237. Asp-265 is a catalytic residue. N-linked (GlcNAc...) asparagine glycosylation is found at Asn-299, Asn-343, Asn-441, Asn-510, Asn-532, Asn-571, Asn-586, Asn-638, Asn-661, and Asn-743.

Belongs to the glycosyl hydrolase 3 family.

The protein localises to the secreted. It carries out the reaction Hydrolysis of terminal, non-reducing beta-D-glucosyl residues with release of beta-D-glucose.. It functions in the pathway glycan metabolism; cellulose degradation. Functionally, beta-glucosidases are one of a number of cellulolytic enzymes involved in the degradation of cellulosic biomass. Catalyzes the last step releasing glucose from the inhibitory cellobiose. The protein is Probable beta-glucosidase D (bglD) of Aspergillus oryzae (strain ATCC 42149 / RIB 40) (Yellow koji mold).